Consider the following 234-residue polypeptide: MDIKLKDFEGPLDLLLHLVSQYKVDIYEVPIVEVIEQYLNYIETLQVMKLEVAGDYMLMASQLMLIKSRRLLPKVVEHIEEEDLEQDLLEKIEEYSRFKAVSQALAKQHDQRAKWYSKPKQELIFEDAILQEDKTVMDLFLAFSNIMAAKRAVLKTNHTVIERDDYKIEDMMASIKQRLEKENVISLSAIFEECQTLNEVISIFLASLELIKLHVVFVEQLSNFGAIILRKEKK.

The protein belongs to the ScpA family. As to quaternary structure, component of a cohesin-like complex composed of ScpA, ScpB and the Smc homodimer, in which ScpA and ScpB bind to the head domain of Smc. The presence of the three proteins is required for the association of the complex with DNA.

The protein localises to the cytoplasm. In terms of biological role, participates in chromosomal partition during cell division. May act via the formation of a condensin-like complex containing Smc and ScpB that pull DNA away from mid-cell into both cell halves. The protein is Segregation and condensation protein A of Streptococcus pyogenes serotype M12 (strain MGAS2096).